The chain runs to 485 residues: Glutamyl-tRNA(Gln) amidotransferase subunit A (485 aa).

Catalysis depends on charge relay system residues K78 and S153. S177 acts as the Acyl-ester intermediate in catalysis.

Belongs to the amidase family. GatA subfamily. Heterotrimer of A, B and C subunits.

The catalysed reaction is L-glutamyl-tRNA(Gln) + L-glutamine + ATP + H2O = L-glutaminyl-tRNA(Gln) + L-glutamate + ADP + phosphate + H(+). Functionally, allows the formation of correctly charged Gln-tRNA(Gln) through the transamidation of misacylated Glu-tRNA(Gln) in organisms which lack glutaminyl-tRNA synthetase. The reaction takes place in the presence of glutamine and ATP through an activated gamma-phospho-Glu-tRNA(Gln). The sequence is that of Glutamyl-tRNA(Gln) amidotransferase subunit A from Geobacter sp. (strain M21).